A 275-amino-acid chain; its full sequence is Large ribosomal subunit protein uL2 (275 aa).

Residues 220–275 are disordered; sequence QTRGAAMNPVDHPHGGGEGKTGSSGHPVSPWGMPAKGFKTRKKKASDKLIISRRKK. Basic residues predominate over residues 257–275; that stretch reads FKTRKKKASDKLIISRRKK.

Belongs to the universal ribosomal protein uL2 family. In terms of assembly, part of the 50S ribosomal subunit. Forms a bridge to the 30S subunit in the 70S ribosome.

In terms of biological role, one of the primary rRNA binding proteins. Required for association of the 30S and 50S subunits to form the 70S ribosome, for tRNA binding and peptide bond formation. It has been suggested to have peptidyltransferase activity; this is somewhat controversial. Makes several contacts with the 16S rRNA in the 70S ribosome. This is Large ribosomal subunit protein uL2 from Wolinella succinogenes (strain ATCC 29543 / DSM 1740 / CCUG 13145 / JCM 31913 / LMG 7466 / NCTC 11488 / FDC 602W) (Vibrio succinogenes).